We begin with the raw amino-acid sequence, 359 residues long: Phosphoribosylformylglycinamidine cyclo-ligase (359 aa).

It belongs to the AIR synthase family.

Its subcellular location is the cytoplasm. It catalyses the reaction 2-formamido-N(1)-(5-O-phospho-beta-D-ribosyl)acetamidine + ATP = 5-amino-1-(5-phospho-beta-D-ribosyl)imidazole + ADP + phosphate + H(+). The protein operates within purine metabolism; IMP biosynthesis via de novo pathway; 5-amino-1-(5-phospho-D-ribosyl)imidazole from N(2)-formyl-N(1)-(5-phospho-D-ribosyl)glycinamide: step 2/2. This chain is Phosphoribosylformylglycinamidine cyclo-ligase, found in Brucella melitensis biotype 2 (strain ATCC 23457).